Reading from the N-terminus, the 473-residue chain is UDP-N-acetylmuramate--L-alanine ligase (473 aa).

119 to 125 (GTHGKTT) lines the ATP pocket.

This sequence belongs to the MurCDEF family.

The protein resides in the cytoplasm. It catalyses the reaction UDP-N-acetyl-alpha-D-muramate + L-alanine + ATP = UDP-N-acetyl-alpha-D-muramoyl-L-alanine + ADP + phosphate + H(+). Its pathway is cell wall biogenesis; peptidoglycan biosynthesis. In terms of biological role, cell wall formation. The protein is UDP-N-acetylmuramate--L-alanine ligase of Caulobacter vibrioides (strain NA1000 / CB15N) (Caulobacter crescentus).